A 247-amino-acid polypeptide reads, in one-letter code: tRNA pseudouridine synthase A (247 aa).

D52 serves as the catalytic Nucleophile. Y111 lines the substrate pocket.

Belongs to the tRNA pseudouridine synthase TruA family. As to quaternary structure, homodimer.

The catalysed reaction is uridine(38/39/40) in tRNA = pseudouridine(38/39/40) in tRNA. Functionally, formation of pseudouridine at positions 38, 39 and 40 in the anticodon stem and loop of transfer RNAs. This Erythrobacter litoralis (strain HTCC2594) protein is tRNA pseudouridine synthase A.